Reading from the N-terminus, the 443-residue chain is Clustered-asparagine-rich protein (443 aa).

Residues 16–106 (TKLHIQNIPP…RNIDAKFAVP (91 aa)) form the RRM 1 domain. A disordered region spans residues 253 to 279 (NHLNNNNNNINNNNNNNNNNNNNNNVM). Positions 256–277 (NNNNNNINNNNNNNNNNNNNNN) are enriched in low complexity. Positions 342 to 435 (SSITIMKKQN…KYLKVQLKKG (94 aa)) constitute an RRM 2 domain.

This Plasmodium falciparum protein is Clustered-asparagine-rich protein.